The chain runs to 268 residues: Ribonuclease P protein subunit p30 (268 aa).

The residue at position 2 (A2) is an N-acetylalanine. Phosphoserine is present on S251.

It belongs to the eukaryotic/archaeal RNase P protein component 3 family. As to quaternary structure, component of nuclear RNase P and RNase MRP ribonucleoproteins. RNase P consists of a catalytic RNA moiety and about 10 protein subunits; POP1, POP4, POP5, POP7, RPP14, RPP21, RPP25, RPP30, RPP38 and RPP40. Within the RNase P complex, POP1, POP7 and RPP25 form the 'finger' subcomplex, POP5, RPP14, RPP40 and homodimeric RPP30 form the 'palm' subcomplex, and RPP21, POP4 and RPP38 form the 'wrist' subcomplex. All subunits of the RNase P complex interact with the catalytic RNA. Several subunits of RNase P are also part of the RNase MRP complex. RNase MRP consists of a catalytic RNA moiety and about 8 protein subunits; POP1, POP7, RPP25, RPP30, RPP38, RPP40 and possibly also POP4 and POP5.

The protein localises to the nucleus. It localises to the nucleolus. Its function is as follows. Component of ribonuclease P, a ribonucleoprotein complex that generates mature tRNA molecules by cleaving their 5'-ends. Also a component of the MRP ribonuclease complex, which cleaves pre-rRNA sequences. In Bos taurus (Bovine), this protein is Ribonuclease P protein subunit p30 (RPP30).